The chain runs to 455 residues: Anaerobic glycerol-3-phosphate dehydrogenase subunit B (455 aa).

It belongs to the anaerobic G-3-P dehydrogenase subunit B family. Composed of a catalytic GlpA/B dimer and of membrane bound GlpC. It depends on FMN as a cofactor.

The enzyme catalyses a quinone + sn-glycerol 3-phosphate = dihydroxyacetone phosphate + a quinol. It functions in the pathway polyol metabolism; glycerol degradation via glycerol kinase pathway; glycerone phosphate from sn-glycerol 3-phosphate (anaerobic route): step 1/1. Conversion of glycerol 3-phosphate to dihydroxyacetone. Uses fumarate or nitrate as electron acceptor. This chain is Anaerobic glycerol-3-phosphate dehydrogenase subunit B, found in Aliivibrio fischeri (strain MJ11) (Vibrio fischeri).